Consider the following 86-residue polypeptide: Translation initiation factor IF-1 (86 aa).

One can recognise an S1-like domain in the interval 1–72 (MPKDDVIKME…TKGRIVYRKK (72 aa)).

It belongs to the IF-1 family. In terms of assembly, component of the 30S ribosomal translation pre-initiation complex which assembles on the 30S ribosome in the order IF-2 and IF-3, IF-1 and N-formylmethionyl-tRNA(fMet); mRNA recruitment can occur at any time during PIC assembly.

Its subcellular location is the cytoplasm. In terms of biological role, one of the essential components for the initiation of protein synthesis. Stabilizes the binding of IF-2 and IF-3 on the 30S subunit to which N-formylmethionyl-tRNA(fMet) subsequently binds. Helps modulate mRNA selection, yielding the 30S pre-initiation complex (PIC). Upon addition of the 50S ribosomal subunit IF-1, IF-2 and IF-3 are released leaving the mature 70S translation initiation complex. The protein is Translation initiation factor IF-1 of Pseudothermotoga lettingae (strain ATCC BAA-301 / DSM 14385 / NBRC 107922 / TMO) (Thermotoga lettingae).